A 212-amino-acid chain; its full sequence is Eukaryotic translation initiation factor 4E-1 (212 aa).

Residues Cys125 and Cys129 are joined by a disulfide bond.

The protein belongs to the eukaryotic initiation factor 4E family. In terms of assembly, EIF4F is a multi-subunit complex, the composition of which varies with external and internal environmental conditions. It is composed of at least EIF4A, EIF4E and EIF4G. EIF4E is also known to interact with other partners, including pgl-1. Interacts with ifet-1. Enriched in the germline from L3 larvae to adults; regions of the gonad undergoing spermatogenesis. Expressed in germ granules (P granules); when associated with pgl-1.

It is found in the cytoplasm. Functionally, recognizes and binds the 7-methylguanosine-containing mRNA cap during an early step in the initiation of protein synthesis and facilitates ribosome binding by inducing the unwinding of the mRNAs secondary structures. All 5 eIF4E proteins bind monomethyl cap structures. Only ife-1, ife-2 and ife-5 bind trimethyl cap structures which result from trans-splicing. Translation of trimethyl cap structure mRNAs may be regulated by intracellular redox state; disulfide bonds change the width and depth of the cap-binding cavity determining selectivity to mRNA caps. Required for progression through meiotic divisions during spermatogenesis and for the production of viable sperm. It is not required during oogenesis. This Caenorhabditis elegans protein is Eukaryotic translation initiation factor 4E-1 (ife-1).